The primary structure comprises 260 residues: Small ribosomal subunit protein eS1 (260 aa).

Ala-2 is modified (N-acetylalanine; partial).

This sequence belongs to the eukaryotic ribosomal protein eS1 family. Component of the small ribosomal subunit. Mature ribosomes consist of a small (40S) and a large (60S) subunit. The 40S subunit contains about 33 different proteins and 1 molecule of RNA (18S). The 60S subunit contains about 49 different proteins and 3 molecules of RNA (25S, 5.8S and 5S).

It localises to the cytoplasm. The polypeptide is Small ribosomal subunit protein eS1 (Mycosarcoma maydis (Corn smut fungus)).